The following is an 88-amino-acid chain: MANTSSAKKATRKIARRTAVNKSRRTQMRGSVRTVEEAIASGDREAALKAMANAEPALMRAAQRNIVHKNAASRKVSRLAHRIAQLGK.

Residues 1–36 (MANTSSAKKATRKIARRTAVNKSRRTQMRGSVRTVE) are disordered.

It belongs to the bacterial ribosomal protein bS20 family.

Binds directly to 16S ribosomal RNA. This Rhodopseudomonas palustris (strain HaA2) protein is Small ribosomal subunit protein bS20.